The chain runs to 304 residues: Mycothiol acetyltransferase (304 aa).

Position 36 (glutamate 36) interacts with 1D-myo-inositol 2-(L-cysteinylamino)-2-deoxy-alpha-D-glucopyranoside. Position 73–75 (73–75) interacts with acetyl-CoA; it reads LFV. One can recognise an N-acetyltransferase domain in the interval 145-304; sequence LEIQTYTESV…EEHCVWAKSD (160 aa). 1D-myo-inositol 2-(L-cysteinylamino)-2-deoxy-alpha-D-glucopyranoside contacts are provided by glutamate 179, lysine 225, and glutamate 236. Residue 240–242 coordinates acetyl-CoA; the sequence is VGL. 1D-myo-inositol 2-(L-cysteinylamino)-2-deoxy-alpha-D-glucopyranoside is bound at residue tyrosine 274. Acetyl-CoA is bound at residue 279–284; the sequence is NDPAVK.

The protein belongs to the acetyltransferase family. MshD subfamily. Monomer.

It catalyses the reaction 1D-myo-inositol 2-(L-cysteinylamino)-2-deoxy-alpha-D-glucopyranoside + acetyl-CoA = mycothiol + CoA + H(+). In terms of biological role, catalyzes the transfer of acetyl from acetyl-CoA to desacetylmycothiol (Cys-GlcN-Ins) to form mycothiol. The chain is Mycothiol acetyltransferase from Corynebacterium aurimucosum (strain ATCC 700975 / DSM 44827 / CIP 107346 / CN-1) (Corynebacterium nigricans).